A 122-amino-acid chain; its full sequence is Large ribosomal subunit protein uL14 (122 aa).

It belongs to the universal ribosomal protein uL14 family. As to quaternary structure, part of the 50S ribosomal subunit. Forms a cluster with proteins L3 and L19. In the 70S ribosome, L14 and L19 interact and together make contacts with the 16S rRNA in bridges B5 and B8.

Its function is as follows. Binds to 23S rRNA. Forms part of two intersubunit bridges in the 70S ribosome. The polypeptide is Large ribosomal subunit protein uL14 (Thioalkalivibrio sulfidiphilus (strain HL-EbGR7)).